Reading from the N-terminus, the 270-residue chain is Tryptophan synthase alpha chain (270 aa).

Residues E49 and D60 each act as proton acceptor in the active site.

This sequence belongs to the TrpA family. As to quaternary structure, tetramer of two alpha and two beta chains.

It carries out the reaction (1S,2R)-1-C-(indol-3-yl)glycerol 3-phosphate + L-serine = D-glyceraldehyde 3-phosphate + L-tryptophan + H2O. It participates in amino-acid biosynthesis; L-tryptophan biosynthesis; L-tryptophan from chorismate: step 5/5. The alpha subunit is responsible for the aldol cleavage of indoleglycerol phosphate to indole and glyceraldehyde 3-phosphate. In Marinobacter nauticus (strain ATCC 700491 / DSM 11845 / VT8) (Marinobacter aquaeolei), this protein is Tryptophan synthase alpha chain.